The primary structure comprises 266 residues: Glucosamine-6-phosphate deaminase (266 aa).

Asp-72 functions as the Proton acceptor; for enolization step in the catalytic mechanism. Asp-141 acts as the For ring-opening step in catalysis. His-143 acts as the Proton acceptor; for ring-opening step in catalysis. The active-site For ring-opening step is the Glu-148.

The protein belongs to the glucosamine/galactosamine-6-phosphate isomerase family. NagB subfamily. In terms of assembly, homohexamer.

The catalysed reaction is alpha-D-glucosamine 6-phosphate + H2O = beta-D-fructose 6-phosphate + NH4(+). The protein operates within amino-sugar metabolism; N-acetylneuraminate degradation; D-fructose 6-phosphate from N-acetylneuraminate: step 5/5. Allosterically activated by N-acetylglucosamine 6-phosphate (GlcNAc6P). In terms of biological role, catalyzes the reversible isomerization-deamination of glucosamine 6-phosphate (GlcN6P) to form fructose 6-phosphate (Fru6P) and ammonium ion. The polypeptide is Glucosamine-6-phosphate deaminase (Vibrio vulnificus (strain CMCP6)).